The primary structure comprises 393 residues: Fasciculation and elongation protein zeta-1 (393 aa).

Residues 1-41 form a disordered region; it reads MEAPLVSLDEEFEDIRPCCTEDPEEKPQSLYGTSPHHLEDP. Ser58 carries the phosphoserine modification. The disordered stretch occupies residues 130–154; the sequence is NGNSSDTEIHEKEEEDEFIEKSEND. Residues 231 to 299 are a coiled coil; that stretch reads SELTELLDQV…KKRRKEKGLS (69 aa). Phosphoserine is present on residues Ser299 and Ser317.

This sequence belongs to the zygin family. Homodimer. Interacts with UBE4B and SAP30L. Interacts with SCOC and ULK1; SCOC interferes with ULK1-binding to FEZ1. Directly interacts with SCOC and UVRAG. Stabilizes the interaction between SCOC and UVRAG during amino acid starvation. Interacts with the NH2-terminal variable region (V1) of PKC zeta and weakly with that of PKC epsilon. In terms of processing, phosphorylated by protein kinase C zeta; which enhances interaction with UBE4B and polyubiquitination. Post-translationally, polyubiquitinated in a UBE4B-dependent manner; which does not lead to proteasomal degradation and may be important for neurogenic activity. Polyubiquitin linkage seems to be mainly through Lys-26. Brain.

The protein resides in the cytoplasm. It is found in the cytoskeleton. Its subcellular location is the microtubule organizing center. The protein localises to the centrosome. It localises to the cell membrane. Functionally, may be involved in axonal outgrowth as component of the network of molecules that regulate cellular morphology and axon guidance machinery. May participate in the transport of mitochondria and other cargos along microtubules. The sequence is that of Fasciculation and elongation protein zeta-1 (Fez1) from Rattus norvegicus (Rat).